The chain runs to 294 residues: Cytidine deaminase (294 aa).

CMP/dCMP-type deaminase domains lie at 48-168 (DEDA…FGPK) and 186-294 (LTGD…VLLG). Substrate is bound at residue 89 to 91 (NME). Residue His102 coordinates Zn(2+). Glu104 (proton donor) is an active-site residue. Cys129 and Cys132 together coordinate Zn(2+).

The protein belongs to the cytidine and deoxycytidylate deaminase family. Homodimer. Requires Zn(2+) as cofactor.

The catalysed reaction is cytidine + H2O + H(+) = uridine + NH4(+). The enzyme catalyses 2'-deoxycytidine + H2O + H(+) = 2'-deoxyuridine + NH4(+). Functionally, this enzyme scavenges exogenous and endogenous cytidine and 2'-deoxycytidine for UMP synthesis. The chain is Cytidine deaminase from Salmonella arizonae (strain ATCC BAA-731 / CDC346-86 / RSK2980).